The sequence spans 424 residues: E3 ubiquitin-protein ligase RNF26 (424 aa).

The next 5 helical transmembrane spans lie at 24–44 (LNFL…AFIY), 60–80 (GFLL…FGGL), 157–177 (ISTQ…TGPL), 183–203 (VVAA…ILLW), and 224–244 (VVFH…ILIV). The segment at 371–413 (CVICQDQSKTVLLLPCRHLCLCQACTEILMRHPVYHRNCPLCR) adopts an RING-type zinc-finger fold.

As to quaternary structure, interacts with INCA1. Interacts with TMEM43, ENDOD1, TMEM33 and TMED1 to form a complex capable of modulating innate immune signaling through the cGAS-STING pathway. Interacts with UBE2J1; this interaction is important for SQSTM1 ubiquitination.

It localises to the endoplasmic reticulum membrane. It catalyses the reaction S-ubiquitinyl-[E2 ubiquitin-conjugating enzyme]-L-cysteine + [acceptor protein]-L-lysine = [E2 ubiquitin-conjugating enzyme]-L-cysteine + N(6)-ubiquitinyl-[acceptor protein]-L-lysine.. The protein operates within protein modification; protein ubiquitination. Functionally, E3 ubiquitin-protein ligase that plays a key role in endosome organization by retaining vesicles in the perinuclear cloud. Acts as a platform for perinuclear positioning of the endosomal system by mediating ubiquitination of SQSTM1 through interaction with the ubiquitin conjugating enzyme UBE2J1. Ubiquitinated SQSTM1 attracts specific vesicle-associated adapters, forming a molecular bridge that restrains cognate vesicles in the perinuclear region and organizes the endosomal pathway for efficient cargo transport. Also acts as a regulator of type I interferon production in response to viral infection by mediating the formation of 'Lys-11'-linked polyubiquitin chains on TMEM173/STING, leading to stabilize TMEM173/STING. Also required to limit type I interferon response by promoting autophagic degradation of IRF3. This Mus musculus (Mouse) protein is E3 ubiquitin-protein ligase RNF26.